A 452-amino-acid chain; its full sequence is Probable phosphoglucosamine mutase (452 aa).

S96 acts as the Phosphoserine intermediate in catalysis. Mg(2+) contacts are provided by S96, D235, D237, and D239. S96 carries the post-translational modification Phosphoserine.

Belongs to the phosphohexose mutase family. Mg(2+) serves as cofactor. Activated by phosphorylation.

It catalyses the reaction alpha-D-glucosamine 1-phosphate = D-glucosamine 6-phosphate. Catalyzes the conversion of glucosamine-6-phosphate to glucosamine-1-phosphate. This is Probable phosphoglucosamine mutase from Methanopyrus kandleri (strain AV19 / DSM 6324 / JCM 9639 / NBRC 100938).